The chain runs to 187 residues: Elongation factor P (187 aa).

It belongs to the elongation factor P family.

It is found in the cytoplasm. The protein operates within protein biosynthesis; polypeptide chain elongation. Involved in peptide bond synthesis. Stimulates efficient translation and peptide-bond synthesis on native or reconstituted 70S ribosomes in vitro. Probably functions indirectly by altering the affinity of the ribosome for aminoacyl-tRNA, thus increasing their reactivity as acceptors for peptidyl transferase. In Nocardia farcinica (strain IFM 10152), this protein is Elongation factor P.